A 267-amino-acid polypeptide reads, in one-letter code: DNA damage-regulated autophagy modulator protein 2 (267 aa).

Transmembrane regions (helical) follow at residues 8 to 28 (LSFL…FSYI), 53 to 73 (RCLF…TMYV), 87 to 107 (LIIK…LGLS), 118 to 138 (FIVH…YMFV), 160 to 180 (LLLV…SSIL), and 203 to 223 (VLHL…FGFF).

It belongs to the DRAM/TMEM150 family. Expressed in the retina.

It is found in the lysosome membrane. The protein localises to the photoreceptor inner segment. The protein resides in the apical cell membrane. Plays a role in the initiation of autophagy. In the retina, might be involved in the process of photoreceptor cells renewal and recycling to preserve visual function. Induces apoptotic cell death when coexpressed with DRAM1. The polypeptide is DNA damage-regulated autophagy modulator protein 2 (Dram2) (Mus musculus (Mouse)).